The sequence spans 365 residues: uncharacterized protein (365 aa).

The protein belongs to the NAD(P)-dependent epimerase/dehydratase family.

It localises to the cytoplasm. Its subcellular location is the nucleus. This is an uncharacterized protein from Schizosaccharomyces pombe (strain 972 / ATCC 24843) (Fission yeast).